An 816-amino-acid polypeptide reads, in one-letter code: uncharacterized protein (816 aa).

Disordered regions lie at residues 1–81 (MDVV…NSNN) and 391–411 (LGSN…NNDF). Positions 28–44 (EVPPQRPRQQNRWKPWW) are enriched in low complexity. The segment covering 64 to 81 (QGRSSPTTDFQDSVNSNN) has biased composition (polar residues). Phosphoserine occurs at positions 76 and 79. Residues 391–400 (LGSNSSTNEN) are compositionally biased toward low complexity.

This is an uncharacterized protein from Saccharomyces cerevisiae (strain ATCC 204508 / S288c) (Baker's yeast).